Here is a 249-residue protein sequence, read N- to C-terminus: Small ribosomal subunit protein eS6 (249 aa).

Residues 223 to 238 are compositionally biased toward basic residues; that stretch reads LRQRDHSKKHTRKVHA. The disordered stretch occupies residues 223–249; it reads LRQRDHSKKHTRKVHAQRAEVAAFQKK.

Belongs to the eukaryotic ribosomal protein eS6 family. Ribosomal protein S6 is the major substrate of protein kinases in eukaryote ribosomes.

Functionally, component of the 40S small ribosomal subunit. Plays an important role in controlling cell growth and proliferation through the selective translation of particular classes of mRNA. This chain is Small ribosomal subunit protein eS6 (RPS6), found in Leishmania major.